We begin with the raw amino-acid sequence, 369 residues long: UDP-N-acetylglucosamine--N-acetylmuramyl-(pentapeptide) pyrophosphoryl-undecaprenol N-acetylglucosamine transferase (369 aa).

Residues 16–18 (TGG), N130, R171, S203, I253, and Q298 contribute to the UDP-N-acetyl-alpha-D-glucosamine site.

This sequence belongs to the glycosyltransferase 28 family. MurG subfamily.

The protein localises to the cell inner membrane. It catalyses the reaction di-trans,octa-cis-undecaprenyl diphospho-N-acetyl-alpha-D-muramoyl-L-alanyl-D-glutamyl-meso-2,6-diaminopimeloyl-D-alanyl-D-alanine + UDP-N-acetyl-alpha-D-glucosamine = di-trans,octa-cis-undecaprenyl diphospho-[N-acetyl-alpha-D-glucosaminyl-(1-&gt;4)]-N-acetyl-alpha-D-muramoyl-L-alanyl-D-glutamyl-meso-2,6-diaminopimeloyl-D-alanyl-D-alanine + UDP + H(+). It participates in cell wall biogenesis; peptidoglycan biosynthesis. In terms of biological role, cell wall formation. Catalyzes the transfer of a GlcNAc subunit on undecaprenyl-pyrophosphoryl-MurNAc-pentapeptide (lipid intermediate I) to form undecaprenyl-pyrophosphoryl-MurNAc-(pentapeptide)GlcNAc (lipid intermediate II). This is UDP-N-acetylglucosamine--N-acetylmuramyl-(pentapeptide) pyrophosphoryl-undecaprenol N-acetylglucosamine transferase from Cytophaga hutchinsonii (strain ATCC 33406 / DSM 1761 / CIP 103989 / NBRC 15051 / NCIMB 9469 / D465).